Reading from the N-terminus, the 192-residue chain is MEPLEFHSGKVCPLNRANVDTDQIIPKQFLKRIERTGFGQFLFFHWRFNDDGTERSDFVLNDPDYKGSSILVAGDNFGCGSSREHAPWALADYGFKVIIAPDFADIFYNNALKNGILVIKMDEQQVKSWMQKAVDGLTLDVDLKQQTIQASDGTITSFDITPYQREKLINGWDDIALTLLKEEKIAAYESAN.

Belongs to the LeuD family. LeuD type 1 subfamily. Heterodimer of LeuC and LeuD.

It carries out the reaction (2R,3S)-3-isopropylmalate = (2S)-2-isopropylmalate. Its pathway is amino-acid biosynthesis; L-leucine biosynthesis; L-leucine from 3-methyl-2-oxobutanoate: step 2/4. Its function is as follows. Catalyzes the isomerization between 2-isopropylmalate and 3-isopropylmalate, via the formation of 2-isopropylmaleate. This is 3-isopropylmalate dehydratase small subunit from Oceanobacillus iheyensis (strain DSM 14371 / CIP 107618 / JCM 11309 / KCTC 3954 / HTE831).